Here is a 145-residue protein sequence, read N- to C-terminus: Leghemoglobin-2 (145 aa).

The 143-residue stretch at 3–145 (AFSDKQEGLV…ELAAAIKKAY (143 aa)) folds into the Globin domain. Residues Y26 and Y31 each carry the nitrated tyrosine modification. S46 is a binding site for heme b. The residue at position 46 (S46) is a Phosphoserine. H62 serves as a coordination point for O2. Heme b contacts are provided by K65, H93, and K96. Y134 is modified (nitrated tyrosine).

The protein belongs to the plant globin family. Monomer. In terms of processing, nitrated in effective nodules and particularly in hypoxic conditions; this mechanism may play a protective role in the symbiosis by buffering toxic peroxynitrite NO(2)(-). Nitration level decrease during nodule senescence. Phosphorylation at Ser-46 disrupts the molecular environment of its porphyrin ring oxygen binding pocket, thus leading to a reduced oxygen consumption and to the delivery of oxygen O(2) to symbiosomes. Root nodules.

The protein localises to the cytoplasm. Its subcellular location is the cytosol. The protein resides in the nucleus. Leghemoglobin that reversibly binds oxygen O(2) through a pentacoordinated heme iron. In root nodules, facilitates the diffusion of oxygen to the bacteroids while preventing the bacterial nitrogenase from being inactivated by buffering dioxygen, nitric oxide and carbon monoxide, and promoting the formation of reactive oxygen species (ROS, e.g. H(2)O(2)). This role is essential for symbiotic nitrogen fixation (SNF). The protein is Leghemoglobin-2 of Vigna unguiculata (Cowpea).